Here is a 688-residue protein sequence, read N- to C-terminus: DNA ligase (688 aa).

NAD(+) contacts are provided by residues 42-46, 91-92, and Glu-128; these read DAEYD and SL. The active-site N6-AMP-lysine intermediate is Lys-130. The NAD(+) site is built by Arg-151, Glu-188, Lys-305, and Lys-329. Residues Cys-423, Cys-426, Cys-441, and Cys-447 each coordinate Zn(2+). Residues 608 to 688 form the BRCT domain; the sequence is APQGVLAGKT…GMRKLLEGQL (81 aa).

The protein belongs to the NAD-dependent DNA ligase family. LigA subfamily. Requires Mg(2+) as cofactor. It depends on Mn(2+) as a cofactor.

The catalysed reaction is NAD(+) + (deoxyribonucleotide)n-3'-hydroxyl + 5'-phospho-(deoxyribonucleotide)m = (deoxyribonucleotide)n+m + AMP + beta-nicotinamide D-nucleotide.. In terms of biological role, DNA ligase that catalyzes the formation of phosphodiester linkages between 5'-phosphoryl and 3'-hydroxyl groups in double-stranded DNA using NAD as a coenzyme and as the energy source for the reaction. It is essential for DNA replication and repair of damaged DNA. In Paraburkholderia phytofirmans (strain DSM 17436 / LMG 22146 / PsJN) (Burkholderia phytofirmans), this protein is DNA ligase.